Reading from the N-terminus, the 568-residue chain is Protein phosphatase 1 regulatory inhibitor subunit 16B (568 aa).

Positions 15–55 (EKVPTLERLRAAQKRRAQQLKKWAQYEQDLQHRKRKHERKR) form a coiled coil. Position 69 is a phosphoserine (Ser69). 4 ANK repeats span residues 100–129 (DGLT…NVNA), 133–162 (ELWT…DLLA), 228–257 (QGAT…RVDV), and 261–290 (DGWE…SLSA). A disordered region spans residues 327–346 (RHKSSLSRRTSSAGSRGKVV). A phosphoserine mark is found at Ser333, Ser337, and Ser350. The segment covering 333–342 (SRRTSSAGSR) has biased composition (low complexity). The tract at residues 373 to 404 (SASEDQRNSTYNGDIRETRTDQENKDPNPRLE) is disordered. The segment covering 386–404 (DIRETRTDQENKDPNPRLE) has biased composition (basic and acidic residues). Residue Ser477 is modified to Phosphoserine. The segment at 504 to 525 (GSGVSRTGEGSSEGKAPLIGGR) is disordered. One copy of the ANK 5 repeat lies at 531–560 (SNGTSVYYTVTSGDPPLLKFKAPIEEMEEK). Cys564 carries S-palmitoyl cysteine lipidation. The residue at position 565 (Cys565) is a Cysteine methyl ester. A lipid anchor (S-farnesyl cysteine) is attached at Cys565. Residues 566-568 (RIS) constitute a propeptide, removed in mature form.

In terms of assembly, interacts with PPP1CA, PPP1CB and MSN. Interacts (via its fourth ankyrin repeat) with the mature dimeric form of RPSA/LAMR1. Interacts with EEF1A1. Interacts with PTEN. Interacts with ECE1. In terms of processing, phosphorylated by PKA and, after PKA priming, by GSK3B. Phosphorylation by GSK3B reduces its association with PP1C and enhances PP1C activity. Dephosphorylation by its associated PP1C results in enhanced association with PP1C, but reduced PP1C activity.

It is found in the cell membrane. The protein resides in the nucleus. It localises to the cell projection. Its function is as follows. Regulator of protein phosphatase 1 (PP1) that acts as a positive regulator of pulmonary endothelial cell (EC) barrier function. Protects the endothelial barrier from lipopolysaccharide (LPS)-induced vascular leakage. Involved in the regulation of the PI3K/AKT signaling pathway. Involved in the regulation of angiogenesis and endothelial cell proliferation through the control of ECE1 dephosphorylation, trafficking and activity. Involved in the regulation of endothelial cell filopodia extension. May be a downstream target for TGF-beta1 signaling cascade in endothelial cells. Involved in PKA-mediated moesin dephosphorylation which is important in EC barrier protection against thrombin stimulation. Promotes the interaction of PPP1CA with RPSA/LAMR1 and in turn facilitates the dephosphorylation of RPSA/LAMR1. Involved in the dephosphorylation of EEF1A1. This Bos taurus (Bovine) protein is Protein phosphatase 1 regulatory inhibitor subunit 16B (PPP1R16B).